A 514-amino-acid chain; its full sequence is Na(+)/H(+) antiporter NhaB (514 aa).

A run of 11 helical transmembrane segments spans residues 21-41, 43-63, 88-108, 143-163, 203-223, 239-259, 304-324, 349-369, 390-410, 448-468, and 484-504; these read LAIVVFLIINPIVFFFISPFI, GWLLVAEFIFTLAMALKCYPL, IMANFEVILLLIFMVAGIFFM, FLDALTVVAVIISVAMGFYGV, LMMHAGVGTALGGVMTVVGEP, FFLRMAPVTIPVFICGLLTCF, ALIAIWLIVGLAFHLAAVGLI, QESLPFTALLVVFFSVVAVII, LALFYLFNGLLSSISDNVFVA, ATPNGQAAFLFLLTSSISPLI, and IVLSIIGLLAIEFILPAATIW.

The protein belongs to the NhaB Na(+)/H(+) (TC 2.A.34) antiporter family.

The protein localises to the cell inner membrane. The catalysed reaction is 2 Na(+)(in) + 3 H(+)(out) = 2 Na(+)(out) + 3 H(+)(in). In terms of biological role, na(+)/H(+) antiporter that extrudes sodium in exchange for external protons. This Haemophilus influenzae (strain ATCC 51907 / DSM 11121 / KW20 / Rd) protein is Na(+)/H(+) antiporter NhaB.